A 159-amino-acid polypeptide reads, in one-letter code: NADH-quinone oxidoreductase subunit B (159 aa).

Residues Cys-36, Cys-37, Cys-102, and Cys-132 each contribute to the [4Fe-4S] cluster site.

It belongs to the complex I 20 kDa subunit family. NDH-1 is composed of 14 different subunits. Subunits NuoB, C, D, E, F, and G constitute the peripheral sector of the complex. [4Fe-4S] cluster serves as cofactor.

It localises to the cell inner membrane. The enzyme catalyses a quinone + NADH + 5 H(+)(in) = a quinol + NAD(+) + 4 H(+)(out). Its function is as follows. NDH-1 shuttles electrons from NADH, via FMN and iron-sulfur (Fe-S) centers, to quinones in the respiratory chain. The immediate electron acceptor for the enzyme in this species is believed to be ubiquinone. Couples the redox reaction to proton translocation (for every two electrons transferred, four hydrogen ions are translocated across the cytoplasmic membrane), and thus conserves the redox energy in a proton gradient. This Acidovorax ebreus (strain TPSY) (Diaphorobacter sp. (strain TPSY)) protein is NADH-quinone oxidoreductase subunit B.